Consider the following 576-residue polypeptide: DNA primase (576 aa).

The CHC2-type zinc finger occupies 40-64; that stretch reads CPFHNEKTPSFNVVAKKQFYHCFGC. Residues 251–333 form the Toprim domain; the sequence is DSIIVVEGYM…GLDAGFIFLP (83 aa). Mg(2+) is bound by residues glutamate 257, aspartate 301, and aspartate 303.

The protein belongs to the DnaG primase family. In terms of assembly, monomer. Interacts with DnaB. Requires Zn(2+) as cofactor. The cofactor is Mg(2+).

It carries out the reaction ssDNA + n NTP = ssDNA/pppN(pN)n-1 hybrid + (n-1) diphosphate.. Its function is as follows. RNA polymerase that catalyzes the synthesis of short RNA molecules used as primers for DNA polymerase during DNA replication. The protein is DNA primase of Legionella pneumophila.